The chain runs to 325 residues: Protease HtpX homolog 2 (325 aa).

A run of 2 helical transmembrane segments spans residues 17–37 (IAILVLGFALIYGILGYFFGF) and 42–62 (LLITGALAFVTIFTILQWLFG). His-146 contacts Zn(2+). Residue Glu-147 is part of the active site. His-150 contributes to the Zn(2+) binding site. 2 helical membrane-spanning segments follow: residues 158-178 (LLLAVGLIPTLLYWIGYGLWW) and 195-215 (ILFLIGIALIAFSFLFNLFVL). Glu-222 provides a ligand contact to Zn(2+).

It belongs to the peptidase M48B family. Zn(2+) serves as cofactor.

It is found in the cell membrane. The protein is Protease HtpX homolog 2 of Sulfurisphaera tokodaii (strain DSM 16993 / JCM 10545 / NBRC 100140 / 7) (Sulfolobus tokodaii).